A 117-amino-acid polypeptide reads, in one-letter code: Large ribosomal subunit protein bL17 (117 aa).

The protein belongs to the bacterial ribosomal protein bL17 family. In terms of assembly, part of the 50S ribosomal subunit. Contacts protein L32.

The protein is Large ribosomal subunit protein bL17 of Dehalococcoides mccartyi (strain ATCC BAA-2100 / JCM 16839 / KCTC 5957 / BAV1).